The primary structure comprises 122 residues: Large ribosomal subunit protein bL17 (122 aa).

Belongs to the bacterial ribosomal protein bL17 family. In terms of assembly, part of the 50S ribosomal subunit. Contacts protein L32.

This chain is Large ribosomal subunit protein bL17, found in Nautilia profundicola (strain ATCC BAA-1463 / DSM 18972 / AmH).